The primary structure comprises 436 residues: T-box transcription factor TBX6 (436 aa).

The segment at residues 100 to 273 (LWKEFSAVGT…ANPFAKGFRE (174 aa)) is a DNA-binding region (T-box). Basic and acidic residues predominate over residues 274 to 284 (NGRNCKRERDA). Disordered stretches follow at residues 274–344 (NGRN…CGGP) and 360–383 (PSHL…APYS). Low complexity predominate over residues 332 to 344 (EAASASAPPCGGP).

The protein localises to the nucleus. Functionally, T-box transcription factor that plays an essential role in the determination of the fate of axial stem cells: neural vs mesodermal. Acts in part by down-regulating, a specific enhancer (N1) of SOX2, to inhibit neural development. Seems to play also an essential role in left/right axis determination and acts through effects on Notch signaling around the node as well as through an effect on the morphology and motility of the nodal cilia. In Mus musculus (Mouse), this protein is T-box transcription factor TBX6 (Tbx6).